Consider the following 377-residue polypeptide: MQKDAQRRPDSDDALALITRGVTLIDVRAPVEFAQGAMPGAINLPLMNNDERAAVGTCYKQHGQQAALALGHRLVYGEVREARLNAWRLACERHPEGFLCCARGGMRSYIVQQWLRERGIDYPLVEGGYKRLRQEAMDATDRLSRLPMVLIGGCTGSGKTQLVKALPTGIDLEGLAHHRGSSFGRTLTPQRAQASFENHLAAAMLNHHARWTTLSNPFWVLEDEGKMIGANHLPAVLREQMLQAPVAVVEEPLERRLERLREEYFVQMQAAFQAALGDEAAGWRAYGDYLHHGLYAIRRRLGLARYAELAALQEAALARQQRTGETHAHFAWLAPLLEGYYDPMYRYQLEKKAQQIAFRGDYHQVDAWLRHRYCASR.

The 124-residue stretch at 18–141 folds into the Rhodanese domain; the sequence is ITRGVTLIDV…LRQEAMDATD (124 aa). Cysteine 101 functions as the S-selanylcysteine intermediate in the catalytic mechanism.

The protein belongs to the SelU family. In terms of assembly, monomer.

The catalysed reaction is 5-methylaminomethyl-2-thiouridine(34) in tRNA + selenophosphate + (2E)-geranyl diphosphate + H2O + H(+) = 5-methylaminomethyl-2-selenouridine(34) in tRNA + (2E)-thiogeraniol + phosphate + diphosphate. It catalyses the reaction 5-methylaminomethyl-2-thiouridine(34) in tRNA + (2E)-geranyl diphosphate = 5-methylaminomethyl-S-(2E)-geranyl-thiouridine(34) in tRNA + diphosphate. It carries out the reaction 5-methylaminomethyl-S-(2E)-geranyl-thiouridine(34) in tRNA + selenophosphate + H(+) = 5-methylaminomethyl-2-(Se-phospho)selenouridine(34) in tRNA + (2E)-thiogeraniol. The enzyme catalyses 5-methylaminomethyl-2-(Se-phospho)selenouridine(34) in tRNA + H2O = 5-methylaminomethyl-2-selenouridine(34) in tRNA + phosphate. Its function is as follows. Involved in the post-transcriptional modification of the uridine at the wobble position (U34) of tRNA(Lys), tRNA(Glu) and tRNA(Gln). Catalyzes the conversion of 2-thiouridine (S2U-RNA) to 2-selenouridine (Se2U-RNA). Acts in a two-step process involving geranylation of 2-thiouridine (S2U) to S-geranyl-2-thiouridine (geS2U) and subsequent selenation of the latter derivative to 2-selenouridine (Se2U) in the tRNA chain. The sequence is that of tRNA 2-selenouridine synthase from Cronobacter sakazakii (strain ATCC BAA-894) (Enterobacter sakazakii).